A 307-amino-acid chain; its full sequence is Sex-lethal homolog (307 aa).

2 consecutive RRM domains span residues 85–163 and 171–251; these read TNLI…YARP and TNLY…LAEE. Residues 285–299 are compositionally biased toward basic residues; the sequence is HRGRHNKNRNQKPHP. The interval 285–307 is disordered; that stretch reads HRGRHNKNRNQKPHPYHNPQKFI.

The protein localises to the nucleus. Unknown; apparently not involved in somatic sex determination. This chain is Sex-lethal homolog (SXL), found in Chrysomya rufifacies (Hairy maggot blowfly).